Reading from the N-terminus, the 79-residue chain is RNA-binding protein KhpA (79 aa).

The KH domain occupies 32–79 (TVVIELRVDPAELGKVIGKQGRIARALRTILTAIGRKIGKRVVLEILE).

It belongs to the KhpA RNA-binding protein family.

The protein localises to the cytoplasm. Functionally, a probable RNA-binding protein. This Aquifex aeolicus (strain VF5) protein is RNA-binding protein KhpA.